The sequence spans 400 residues: Enolase (400 aa).

Glutamine 154 provides a ligand contact to (2R)-2-phosphoglycerate. Glutamate 197 acts as the Proton donor in catalysis. Mg(2+) is bound by residues aspartate 233, glutamate 274, and aspartate 301. (2R)-2-phosphoglycerate contacts are provided by lysine 326, arginine 355, serine 356, and lysine 377. Lysine 326 (proton acceptor) is an active-site residue.

Belongs to the enolase family. The cofactor is Mg(2+).

The protein resides in the cytoplasm. The protein localises to the secreted. It is found in the cell surface. It catalyses the reaction (2R)-2-phosphoglycerate = phosphoenolpyruvate + H2O. It participates in carbohydrate degradation; glycolysis; pyruvate from D-glyceraldehyde 3-phosphate: step 4/5. Catalyzes the reversible conversion of 2-phosphoglycerate (2-PG) into phosphoenolpyruvate (PEP). It is essential for the degradation of carbohydrates via glycolysis. The sequence is that of Enolase from Picrophilus torridus (strain ATCC 700027 / DSM 9790 / JCM 10055 / NBRC 100828 / KAW 2/3).